We begin with the raw amino-acid sequence, 375 residues long: Probable mitochondrial tRNA-specific 2-thiouridylase 1 (375 aa).

ATP contacts are provided by residues 7–14 (GMSGGVDS) and M33. An interaction with target base in tRNA region spans residues 94–96 (VPD). Catalysis depends on C99, which acts as the Nucleophile. An intrachain disulfide couples C99 to C205. G124 lines the ATP pocket. Residues 154 to 156 (KDQ) form an interaction with tRNA region. C205 (cysteine persulfide intermediate) is an active-site residue. The segment at 319-320 (QR) is interaction with tRNA.

It belongs to the MnmA/TRMU family.

Its subcellular location is the mitochondrion. The catalysed reaction is 5-taurinomethyluridine(34) in tRNA + S-sulfanyl-L-cysteinyl-[protein] + AH2 + ATP = 5-taurinomethyl-2-thiouridine(34) in tRNA + L-cysteinyl-[protein] + A + AMP + diphosphate + H(+). Functionally, catalyzes the 2-thiolation of uridine at the wobble position (U34) of mitochondrial tRNA(Lys), tRNA(Glu) and tRNA(Gln). Required for the formation of 5-taurinomethyl-2-thiouridine (tm5s2U) of mitochondrial tRNA(Lys), tRNA(Glu), and tRNA(Gln) at the wobble position. ATP is required to activate the C2 atom of the wobble base. This is Probable mitochondrial tRNA-specific 2-thiouridylase 1 from Caenorhabditis elegans.